Reading from the N-terminus, the 170-residue chain is Urease accessory protein UreE (170 aa).

Residues 137-170 (PFDPESGAYAHAGREQSHAHSHEHSHADGHTHAH) are disordered. Positions 148–170 (AGREQSHAHSHEHSHADGHTHAH) are enriched in basic and acidic residues.

This sequence belongs to the UreE family.

Its subcellular location is the cytoplasm. Its function is as follows. Involved in urease metallocenter assembly. Binds nickel. Probably functions as a nickel donor during metallocenter assembly. In Pseudoalteromonas translucida (strain TAC 125), this protein is Urease accessory protein UreE.